We begin with the raw amino-acid sequence, 284 residues long: tRNA dimethylallyltransferase (284 aa).

6–13 (GPTASGKS) contacts ATP. 8 to 13 (TASGKS) serves as a coordination point for substrate. The interaction with substrate tRNA stretch occupies residues 31–34 (DSLS).

It belongs to the IPP transferase family. Monomer. The cofactor is Mg(2+).

The catalysed reaction is adenosine(37) in tRNA + dimethylallyl diphosphate = N(6)-dimethylallyladenosine(37) in tRNA + diphosphate. Functionally, catalyzes the transfer of a dimethylallyl group onto the adenine at position 37 in tRNAs that read codons beginning with uridine, leading to the formation of N6-(dimethylallyl)adenosine (i(6)A). In Nautilia profundicola (strain ATCC BAA-1463 / DSM 18972 / AmH), this protein is tRNA dimethylallyltransferase.